The primary structure comprises 259 residues: Imidazole glycerol phosphate synthase subunit HisF (259 aa).

Residues D11 and D130 contribute to the active site.

This sequence belongs to the HisA/HisF family. Heterodimer of HisH and HisF.

It is found in the cytoplasm. It carries out the reaction 5-[(5-phospho-1-deoxy-D-ribulos-1-ylimino)methylamino]-1-(5-phospho-beta-D-ribosyl)imidazole-4-carboxamide + L-glutamine = D-erythro-1-(imidazol-4-yl)glycerol 3-phosphate + 5-amino-1-(5-phospho-beta-D-ribosyl)imidazole-4-carboxamide + L-glutamate + H(+). The protein operates within amino-acid biosynthesis; L-histidine biosynthesis; L-histidine from 5-phospho-alpha-D-ribose 1-diphosphate: step 5/9. Functionally, IGPS catalyzes the conversion of PRFAR and glutamine to IGP, AICAR and glutamate. The HisF subunit catalyzes the cyclization activity that produces IGP and AICAR from PRFAR using the ammonia provided by the HisH subunit. This Solidesulfovibrio magneticus (strain ATCC 700980 / DSM 13731 / RS-1) (Desulfovibrio magneticus) protein is Imidazole glycerol phosphate synthase subunit HisF.